Reading from the N-terminus, the 124-residue chain is MPTINQLVRRPRKPSVSANKAPALQHNPQKRAVCVKVYTTTPKKPNSALRKVARVRIAGYGSEVIAYIPGEGHNLQEHSVVLIRGGRVKDLPGVRYHIVRGALDTKGVQGRKKARSKYGVKRGS.

A disordered region spans residues 1–24; it reads MPTINQLVRRPRKPSVSANKAPAL. Residue D90 is modified to 3-methylthioaspartic acid.

Belongs to the universal ribosomal protein uS12 family. Part of the 30S ribosomal subunit. Contacts proteins S8 and S17. May interact with IF1 in the 30S initiation complex.

In terms of biological role, with S4 and S5 plays an important role in translational accuracy. Its function is as follows. Interacts with and stabilizes bases of the 16S rRNA that are involved in tRNA selection in the A site and with the mRNA backbone. Located at the interface of the 30S and 50S subunits, it traverses the body of the 30S subunit contacting proteins on the other side and probably holding the rRNA structure together. The combined cluster of proteins S8, S12 and S17 appears to hold together the shoulder and platform of the 30S subunit. This chain is Small ribosomal subunit protein uS12, found in Anaplasma phagocytophilum (strain HZ).